A 629-amino-acid chain; its full sequence is Pumilio homolog 3 (629 aa).

Basic residues-rich tracts occupy residues 1–10 (MEGKPRKKSF) and 18–37 (PSFK…RPFK). The interval 1 to 92 (MEGKPRKKSF…EGDERKKPKW (92 aa)) is disordered. A compositionally biased stretch (basic and acidic residues) spans 62–92 (KPTDGKFAKKRKFPGDRIKQEEGDERKKPKW). The Nuclear localization signal motif lies at 88–100 (KKPKWDEFKQKKK). Positions 120–473 (RAKQVWEMVR…ELLEAASPSL (354 aa)) constitute a PUM-HD domain. Pumilio repeat units follow at residues 160-195 (HDST…LSKS), 196-231 (KYAR…MLRH), 232-260 (SEAS…ELYG), 272-308 (PTLE…VIKH), 309-344 (SLVH…MAHT), 345-380 (HDGA…FAMG), 381-418 (EYAH…IISN), 419-487 (KHGK…MVMD), 488-534 (KSCC…MAEH), 535-579 (PAGH…WASV), and 580-618 (NRGA…LQNS).

In adult, expressed at high levels in eye and ovary and at lower levels in brain, testis and head kidney. In the adult ovary, prominently expressed in early immature follicles.

Its subcellular location is the nucleus. It localises to the nucleolus. It is found in the nucleoplasm. The protein localises to the chromosome. In terms of biological role, inhibits the poly(ADP-ribosyl)ation activity of PARP1 and the degradation of PARP1 by CASP3 following genotoxic stress. Binds to double-stranded RNA or DNA without sequence specificity. Involved in development of the eye and of primordial germ cells. The polypeptide is Pumilio homolog 3 (pum3) (Danio rerio (Zebrafish)).